The sequence spans 255 residues: Syntaxin-6 (255 aa).

Position 2 is an N-acetylserine (S2). S2 carries the phosphoserine modification. A required for interaction with VPS51 region spans residues S2 to Q168. Residues S2 to Q234 are Cytoplasmic-facing. The stretch at E41–N74 forms a coiled coil. A phosphoserine mark is found at S129 and S152. The t-SNARE coiled-coil homology domain occupies Q163–V225. The helical; Anchor for type IV membrane protein transmembrane segment at W235–L255 threads the bilayer.

Belongs to the syntaxin family. In terms of assembly, identified in a complex containing STX6, STX12 and VAMP4. This complex also includes VTI1A. Binds EEA1. Interacts with VPS45A and GOPC. Interacts with MARCHF2; the interaction promotes MARCHF2-mediated ubiquitination and degradation of CFTR. Interacts with MARCHF3. Interacts with BLTP3B (via C-terminal coiled-coil domain). Interacts with BAIAP3; this interaction is increased in the presence of calcium. Interacts with VPS13B.

It localises to the golgi apparatus membrane. The protein localises to the golgi apparatus. Its subcellular location is the trans-Golgi network membrane. It is found in the recycling endosome membrane. Functionally, SNARE promoting movement of transport vesicles to target membranes. Targets endosomes to the trans-Golgi network, and may therefore function in retrograde trafficking. Together with SNARE STX12, promotes movement of vesicles from endosomes to the cell membrane, and may therefore function in the endocytic recycling pathway. The protein is Syntaxin-6 (Stx6) of Mus musculus (Mouse).